The following is a 256-amino-acid chain: Pimeloyl-[acyl-carrier protein] methyl ester esterase (256 aa).

Positions 15 to 242 (HLVLLHGWGL…AAHAPFISHP (228 aa)) constitute an AB hydrolase-1 domain. Substrate is bound by residues Trp22, 82 to 83 (SL), and 143 to 147 (FLALQ). Catalysis depends on Ser82, which acts as the Nucleophile. Residues Asp207 and His235 contribute to the active site. His235 contacts substrate.

Belongs to the AB hydrolase superfamily. Carboxylesterase BioH family. As to quaternary structure, monomer.

Its subcellular location is the cytoplasm. It carries out the reaction 6-carboxyhexanoyl-[ACP] methyl ester + H2O = 6-carboxyhexanoyl-[ACP] + methanol + H(+). It participates in cofactor biosynthesis; biotin biosynthesis. In terms of biological role, the physiological role of BioH is to remove the methyl group introduced by BioC when the pimeloyl moiety is complete. It allows to synthesize pimeloyl-ACP via the fatty acid synthetic pathway through the hydrolysis of the ester bonds of pimeloyl-ACP esters. This Salmonella choleraesuis (strain SC-B67) protein is Pimeloyl-[acyl-carrier protein] methyl ester esterase.